A 339-amino-acid chain; its full sequence is Ketol-acid reductoisomerase (NADP(+)) (339 aa).

In terms of domain architecture, KARI N-terminal Rossmann spans 1–182; it reads MRVYYDRDAD…GGGRAGIIET (182 aa). Residues 24 to 27, R48, S51, S53, and 83 to 86 each bind NADP(+); these read YGSQ and DELQ. The active site involves H108. Position 134 (G134) interacts with NADP(+). In terms of domain architecture, KARI C-terminal knotted spans 183-328; that stretch reads TFREECETDL…AKLRDMMPWI (146 aa). Positions 191, 195, 227, and 231 each coordinate Mg(2+). S252 contributes to the substrate binding site.

The protein belongs to the ketol-acid reductoisomerase family. The cofactor is Mg(2+).

It carries out the reaction (2R)-2,3-dihydroxy-3-methylbutanoate + NADP(+) = (2S)-2-acetolactate + NADPH + H(+). The enzyme catalyses (2R,3R)-2,3-dihydroxy-3-methylpentanoate + NADP(+) = (S)-2-ethyl-2-hydroxy-3-oxobutanoate + NADPH + H(+). It functions in the pathway amino-acid biosynthesis; L-isoleucine biosynthesis; L-isoleucine from 2-oxobutanoate: step 2/4. Its pathway is amino-acid biosynthesis; L-valine biosynthesis; L-valine from pyruvate: step 2/4. Its function is as follows. Involved in the biosynthesis of branched-chain amino acids (BCAA). Catalyzes an alkyl-migration followed by a ketol-acid reduction of (S)-2-acetolactate (S2AL) to yield (R)-2,3-dihydroxy-isovalerate. In the isomerase reaction, S2AL is rearranged via a Mg-dependent methyl migration to produce 3-hydroxy-3-methyl-2-ketobutyrate (HMKB). In the reductase reaction, this 2-ketoacid undergoes a metal-dependent reduction by NADPH to yield (R)-2,3-dihydroxy-isovalerate. The polypeptide is Ketol-acid reductoisomerase (NADP(+)) (Rhodopseudomonas palustris (strain BisB18)).